The chain runs to 58 residues: MTQVTVGENEGIESALRRFKRQVSKAGIFGELKRLRHHETPVEKYKRKLQQRRRSRRR.

The interval Arg-36–Arg-58 is disordered. Over residues Tyr-45–Arg-58 the composition is skewed to basic residues.

This sequence belongs to the bacterial ribosomal protein bS21 family.

The sequence is that of Small ribosomal subunit protein bS21 from Prochlorococcus marinus (strain NATL1A).